A 99-amino-acid chain; its full sequence is Seminal vesicle secretory protein 6 (99 aa).

The signal sequence occupies residues 1–21 (MSPTSFFLLTMLLVLVTETAA).

It belongs to the SVP2/SVP5/SVP6 family. As to expression, testis.

It is found in the secreted. The protein localises to the extracellular space. This is Seminal vesicle secretory protein 6 (Svs6) from Mus musculus (Mouse).